The chain runs to 172 residues: MHCPYCRNTDTRVLDSRVADDGGSIRRRRTCSACAKRFTTVELMQLTVLKRSGASEPFTREKAVAGVRKACKGRPVTEDQLACLGQAVEDALRLDGAAEVPAHEVGLAILGPLRELDEVAYLRFASVYRAFESADDFEDEIAMLRAERPAVAIEPVTVPATEPAPPQPVATG.

The segment at 3–34 is a zinc-finger region; the sequence is CPYCRNTDTRVLDSRVADDGGSIRRRRTCSAC. The 91-residue stretch at 46–136 folds into the ATP-cone domain; that stretch reads LTVLKRSGAS…VYRAFESADD (91 aa).

The protein belongs to the NrdR family. Zn(2+) serves as cofactor.

Negatively regulates transcription of bacterial ribonucleotide reductase nrd genes and operons by binding to NrdR-boxes. This is Transcriptional repressor NrdR from Nocardioides sp. (strain ATCC BAA-499 / JS614).